We begin with the raw amino-acid sequence, 181 residues long: Alkyl hydroperoxide reductase AhpD (181 aa).

Cysteine 131 (proton donor) is an active-site residue. Cysteine 131 and cysteine 134 form a disulfide bridge. The active-site Cysteine sulfenic acid (-SOH) intermediate is the cysteine 134.

Belongs to the AhpD family.

It carries out the reaction N(6)-[(R)-dihydrolipoyl]-L-lysyl-[lipoyl-carrier protein] + a hydroperoxide = N(6)-[(R)-lipoyl]-L-lysyl-[lipoyl-carrier protein] + an alcohol + H2O. In terms of biological role, antioxidant protein with alkyl hydroperoxidase activity. Required for the reduction of the AhpC active site cysteine residues and for the regeneration of the AhpC enzyme activity. This Bradyrhizobium sp. (strain ORS 278) protein is Alkyl hydroperoxide reductase AhpD.